The following is a 372-amino-acid chain: Dual-specificity RNA methyltransferase RlmN (372 aa).

The active-site Proton acceptor is the E93. The region spanning 99–338 (EKDRATLCIS…VTVRKTRGDD (240 aa)) is the Radical SAM core domain. C106 and C343 are joined by a disulfide. Positions 113, 117, and 120 each coordinate [4Fe-4S] cluster. S-adenosyl-L-methionine is bound by residues 167–168 (GE), S199, 221–223 (SLH), and N300. C343 functions as the S-methylcysteine intermediate in the catalytic mechanism.

This sequence belongs to the radical SAM superfamily. RlmN family. It depends on [4Fe-4S] cluster as a cofactor.

The protein resides in the cytoplasm. The enzyme catalyses adenosine(2503) in 23S rRNA + 2 reduced [2Fe-2S]-[ferredoxin] + 2 S-adenosyl-L-methionine = 2-methyladenosine(2503) in 23S rRNA + 5'-deoxyadenosine + L-methionine + 2 oxidized [2Fe-2S]-[ferredoxin] + S-adenosyl-L-homocysteine. The catalysed reaction is adenosine(37) in tRNA + 2 reduced [2Fe-2S]-[ferredoxin] + 2 S-adenosyl-L-methionine = 2-methyladenosine(37) in tRNA + 5'-deoxyadenosine + L-methionine + 2 oxidized [2Fe-2S]-[ferredoxin] + S-adenosyl-L-homocysteine. Specifically methylates position 2 of adenine 2503 in 23S rRNA and position 2 of adenine 37 in tRNAs. m2A2503 modification seems to play a crucial role in the proofreading step occurring at the peptidyl transferase center and thus would serve to optimize ribosomal fidelity. In Psychromonas ingrahamii (strain DSM 17664 / CCUG 51855 / 37), this protein is Dual-specificity RNA methyltransferase RlmN.